The primary structure comprises 288 residues: Beta-lactamase PSE-1 (288 aa).

The first 17 residues, 1-17 (MKFLLAFSLLIPSVVFA), serve as a signal peptide directing secretion. Catalysis depends on Ser65, which acts as the Acyl-ester intermediate. Cys72 and Cys118 are disulfide-bonded. 229-231 (RSG) is a binding site for substrate.

It belongs to the class-A beta-lactamase family. In terms of assembly, monomer.

It carries out the reaction a beta-lactam + H2O = a substituted beta-amino acid. Its activity is regulated as follows. Inhibited by p-chloromercuribenzoate but not by cloxacillin. In terms of biological role, hydrolyzes penicillin, ampicillin and carbenicillin but not other antibiotics including oxacillin, methicillin and cloxacillin. The chain is Beta-lactamase PSE-1 from Pseudomonas aeruginosa.